The following is a 488-amino-acid chain: Ribulose bisphosphate carboxylase large chain (488 aa).

Residues Asn127 and Thr177 each coordinate substrate. Residue Lys179 is the Proton acceptor of the active site. Substrate is bound at residue Lys181. Mg(2+) is bound by residues Lys205, Asp207, and Glu208. Lys205 bears the N6-carboxylysine mark. His297 (proton acceptor) is an active-site residue. Substrate contacts are provided by Arg298, His330, and Ser382.

The protein belongs to the RuBisCO large chain family. Type I subfamily. Heterohexadecamer of 8 large chains and 8 small chains. Mg(2+) is required as a cofactor.

The protein localises to the plastid. The protein resides in the chloroplast. The enzyme catalyses 2 (2R)-3-phosphoglycerate + 2 H(+) = D-ribulose 1,5-bisphosphate + CO2 + H2O. It carries out the reaction D-ribulose 1,5-bisphosphate + O2 = 2-phosphoglycolate + (2R)-3-phosphoglycerate + 2 H(+). In terms of biological role, ruBisCO catalyzes two reactions: the carboxylation of D-ribulose 1,5-bisphosphate, the primary event in carbon dioxide fixation, as well as the oxidative fragmentation of the pentose substrate in the photorespiration process. Both reactions occur simultaneously and in competition at the same active site. This Pyropia haitanensis (Red seaweed) protein is Ribulose bisphosphate carboxylase large chain (rbcL).